The primary structure comprises 366 residues: UDP-N-acetylglucosamine--N-acetylmuramyl-(pentapeptide) pyrophosphoryl-undecaprenol N-acetylglucosamine transferase (366 aa).

UDP-N-acetyl-alpha-D-glucosamine contacts are provided by residues 10–12, N124, R165, S195, I250, and Q295; that span reads TGG.

Belongs to the glycosyltransferase 28 family. MurG subfamily.

It localises to the cell inner membrane. The enzyme catalyses di-trans,octa-cis-undecaprenyl diphospho-N-acetyl-alpha-D-muramoyl-L-alanyl-D-glutamyl-meso-2,6-diaminopimeloyl-D-alanyl-D-alanine + UDP-N-acetyl-alpha-D-glucosamine = di-trans,octa-cis-undecaprenyl diphospho-[N-acetyl-alpha-D-glucosaminyl-(1-&gt;4)]-N-acetyl-alpha-D-muramoyl-L-alanyl-D-glutamyl-meso-2,6-diaminopimeloyl-D-alanyl-D-alanine + UDP + H(+). The protein operates within cell wall biogenesis; peptidoglycan biosynthesis. Functionally, cell wall formation. Catalyzes the transfer of a GlcNAc subunit on undecaprenyl-pyrophosphoryl-MurNAc-pentapeptide (lipid intermediate I) to form undecaprenyl-pyrophosphoryl-MurNAc-(pentapeptide)GlcNAc (lipid intermediate II). This chain is UDP-N-acetylglucosamine--N-acetylmuramyl-(pentapeptide) pyrophosphoryl-undecaprenol N-acetylglucosamine transferase, found in Thermodesulfovibrio yellowstonii (strain ATCC 51303 / DSM 11347 / YP87).